The sequence spans 178 residues: Bifunctional protein PyrR (178 aa).

Residues 99-111 carry the PRPP-binding motif; the sequence is VIIVDDVLYTCRT.

It belongs to the purine/pyrimidine phosphoribosyltransferase family. PyrR subfamily. Homodimer and homohexamer; in equilibrium.

The catalysed reaction is UMP + diphosphate = 5-phospho-alpha-D-ribose 1-diphosphate + uracil. Functionally, regulates transcriptional attenuation of the pyrimidine nucleotide (pyr) operon by binding in a uridine-dependent manner to specific sites on pyr mRNA. This disrupts an antiterminator hairpin in the RNA and favors formation of a downstream transcription terminator, leading to a reduced expression of downstream genes. In terms of biological role, also displays a weak uracil phosphoribosyltransferase activity which is not physiologically significant. This chain is Bifunctional protein PyrR, found in Clostridium perfringens (strain ATCC 13124 / DSM 756 / JCM 1290 / NCIMB 6125 / NCTC 8237 / Type A).